Consider the following 511-residue polypeptide: DELLA protein RGL1 (511 aa).

A compositionally biased stretch (basic and acidic residues) spans 1-11 (MKREHNHRESS). The tract at residues 1–20 (MKREHNHRESSAGEGGSSSM) is disordered. The DELLA motif signature appears at 32–36 (DELLV). An LEXLE motif motif is present at residues 54–58 (LEQLE). A VHYNP motif motif is present at residues 73 to 77 (VHYNP). Positions 143–506 (LDSQETGVRL…RPLIATSAWR (364 aa)) constitute a GRAS domain. The interval 150–204 (VRLVHALLACAEAVQQNNLKLADALVKHVGLLASSQAGAMRKVATYFAEGLARRI) is leucine repeat I (LRI). The LxCxE motif motif lies at 157–161 (LACAE). Positions 223 to 288 (QIHFYESCPY…NGPPDFRLTG (66 aa)) are VHIID. Residues 254–258 (VHVID) carry the VHIID motif. A leucine repeat II (LRII) region spans residues 298 to 330 (EVGWKLGQLASTIGVNFEFKSIALNNLSDLKPE). Residues 341–427 (VAVNSVFELH…ELFLGRQILN (87 aa)) are PFYRE. Positions 349 to 353 (LHRLL) match the LXXLL motif motif. The segment at 430–506 (ACEGEDRVER…RPLIATSAWR (77 aa)) is SAW.

This sequence belongs to the GRAS family. DELLA subfamily. As to quaternary structure, interacts directly with the GID2/SLY1 component of the SCF(GID2) complex. Interacts (via N-terminus) with GID1A, GID1B and GID1B (via N-terminus). Interacts with the BOI proteins BOI, BRG1, BRG2 and BRG3. Binds to and coactivates GAF1/IDD2 and ENY/IDD1. In terms of processing, phosphorylated. Post-translationally, may be ubiquitinated, as suggested by its interaction with GID2. Ubiquitination is however unsure since in contrast to other DELLA proteins, it is not ubiquitinated and degraded upon GA application. Nevertheless, ubiquitination may be triggered by other processes. In terms of tissue distribution, predominantly expressed in germinating seeds and flowers and siliques. Highly expressed in inflorescences and weakly or not expressed in rosette leaves, etiolated seedlings, siliques, mature stems and roots. RGA and GAI transcripts were detected at slightly varying levels in all tissues examined. RGL2 signal was undetected, and RGL3 signal was very weak in all tissues examined (rosette leaves, seedlings, inflorescences, and siliques) except inflorescences. In the flower, it is expressed in developing ovules as well as in developing anthers throughout microspore development.

The protein localises to the nucleus. Its function is as follows. Probable transcriptional regulator that acts as a repressor of the gibberellin (GA) signaling pathway. No effect of the BOI proteins on its stability. Probably acts by participating in large multiprotein complexes that repress transcription of GA-inducible genes. Has overlapping but distinct roles in GA signaling compared to RGA and GAI. Regulates the floral development. May also participate in seed germination and in ovule and anther development. Its activity is probably regulated by other phytohormones such as auxin and ethylene. This is DELLA protein RGL1 (RGL1) from Arabidopsis thaliana (Mouse-ear cress).